Here is a 295-residue protein sequence, read N- to C-terminus: tRNA dimethylallyltransferase (295 aa).

9–16 serves as a coordination point for ATP; sequence GATATGKS. Substrate is bound at residue 11–16; sequence TATGKS. Positions 34–37 are interaction with substrate tRNA; it reads DSRQ.

It belongs to the IPP transferase family. Monomer. Requires Mg(2+) as cofactor.

It catalyses the reaction adenosine(37) in tRNA + dimethylallyl diphosphate = N(6)-dimethylallyladenosine(37) in tRNA + diphosphate. In terms of biological role, catalyzes the transfer of a dimethylallyl group onto the adenine at position 37 in tRNAs that read codons beginning with uridine, leading to the formation of N6-(dimethylallyl)adenosine (i(6)A). In Nostoc sp. (strain PCC 7120 / SAG 25.82 / UTEX 2576), this protein is tRNA dimethylallyltransferase.